Consider the following 201-residue polypeptide: Holliday junction resolvase RecU (201 aa).

Mg(2+) is bound by residues Thr85, Asp87, Glu100, and Gln119.

The protein belongs to the RecU family. The cofactor is Mg(2+).

Its subcellular location is the cytoplasm. It carries out the reaction Endonucleolytic cleavage at a junction such as a reciprocal single-stranded crossover between two homologous DNA duplexes (Holliday junction).. Endonuclease that resolves Holliday junction intermediates in genetic recombination. Cleaves mobile four-strand junctions by introducing symmetrical nicks in paired strands. Promotes annealing of linear ssDNA with homologous dsDNA. Required for DNA repair, homologous recombination and chromosome segregation. This Geobacillus sp. (strain WCH70) protein is Holliday junction resolvase RecU.